The following is a 536-amino-acid chain: E3 ubiquitin-protein ligase Godzilla (536 aa).

The first 21 residues, 1–21 (MSKRSCQILTLLGLCLVCHEA), serve as a signal peptide directing secretion. Over 22-174 (TLVGGHVLVY…DELPFNINTQ (153 aa)) the chain is Extracellular. The 63-residue stretch at 89 to 151 (FVALVARGEC…FVGHTTGKAL (63 aa)) folds into the PA domain. N109 and N132 each carry an N-linked (GlcNAc...) asparagine glycan. Residues 175-195 (LILPFSILIGMCFIIMVIYMI) form a helical membrane-spanning segment. Over 196 to 536 (YKCIREQRRL…HSASDRQFLI (341 aa)) the chain is Cytoplasmic. The RING-type; atypical zinc finger occupies 235–277 (CVICLEDFIEDDKLRVLPCSHPYHTHCIDPWLTENRRVCPICK). Disordered regions lie at residues 287 to 334 (RASR…GAAG) and 350 to 372 (HGTF…SDDE). Residues 307-334 (TPLLQQQQSNGRQVGQVSSASSAGGAAG) are compositionally biased toward low complexity.

It belongs to the Godzilla family.

Its subcellular location is the endosome membrane. It catalyses the reaction S-ubiquitinyl-[E2 ubiquitin-conjugating enzyme]-L-cysteine + [acceptor protein]-L-lysine = [E2 ubiquitin-conjugating enzyme]-L-cysteine + N(6)-ubiquitinyl-[acceptor protein]-L-lysine.. Its pathway is protein modification; protein ubiquitination. Endosomal E3 ubiquitin-protein ligase that regulates the recycling endosome pathway by mediating ubiquitination of Synaptobrevin (Syb). Also acts as a regulator of transcytosis in wing imaginal disks by catalyzing ubiquitination of Syb: ubiquitination of Syb promotes transcytosis of wingless (wg) to the basolateral surface. This is E3 ubiquitin-protein ligase Godzilla from Drosophila melanogaster (Fruit fly).